Reading from the N-terminus, the 225-residue chain is UPF0758 protein BPP1850 (225 aa).

The 123-residue stretch at alanine 103 to leucine 225 folds into the MPN domain. Residues histidine 174, histidine 176, and aspartate 187 each coordinate Zn(2+). The short motif at histidine 174 to aspartate 187 is the JAMM motif element.

This sequence belongs to the UPF0758 family.

This chain is UPF0758 protein BPP1850, found in Bordetella parapertussis (strain 12822 / ATCC BAA-587 / NCTC 13253).